Here is a 439-residue protein sequence, read N- to C-terminus: tRNA-2-methylthio-N(6)-dimethylallyladenosine synthase (439 aa).

The region spanning 2–119 is the MTTase N-terminal domain; it reads KKLYLKTHGC…LPDLLDSVIQ (118 aa). Positions 11, 48, 82, 156, 160, and 163 each coordinate [4Fe-4S] cluster. A Radical SAM core domain is found at 142–374; it reads RAEGPSAFVS…QNRINVKAAE (233 aa). The TRAM domain occupies 377-439; sequence QSMVGTQQRI…RPYSLWGEIC (63 aa).

It belongs to the methylthiotransferase family. MiaB subfamily. As to quaternary structure, monomer. Requires [4Fe-4S] cluster as cofactor.

The protein resides in the cytoplasm. It carries out the reaction N(6)-dimethylallyladenosine(37) in tRNA + (sulfur carrier)-SH + AH2 + 2 S-adenosyl-L-methionine = 2-methylsulfanyl-N(6)-dimethylallyladenosine(37) in tRNA + (sulfur carrier)-H + 5'-deoxyadenosine + L-methionine + A + S-adenosyl-L-homocysteine + 2 H(+). In terms of biological role, catalyzes the methylthiolation of N6-(dimethylallyl)adenosine (i(6)A), leading to the formation of 2-methylthio-N6-(dimethylallyl)adenosine (ms(2)i(6)A) at position 37 in tRNAs that read codons beginning with uridine. In Coxiella burnetii (strain Dugway 5J108-111), this protein is tRNA-2-methylthio-N(6)-dimethylallyladenosine synthase.